Reading from the N-terminus, the 197-residue chain is Elongation factor Ts (197 aa).

The tract at residues 81–84 is involved in Mg(2+) ion dislocation from EF-Tu; sequence TDFV.

It belongs to the EF-Ts family.

The protein localises to the cytoplasm. Associates with the EF-Tu.GDP complex and induces the exchange of GDP to GTP. It remains bound to the aminoacyl-tRNA.EF-Tu.GTP complex up to the GTP hydrolysis stage on the ribosome. The chain is Elongation factor Ts from Coprothermobacter proteolyticus (strain ATCC 35245 / DSM 5265 / OCM 4 / BT).